Reading from the N-terminus, the 304-residue chain is Undecaprenyl-diphosphatase (304 aa).

Helical transmembrane passes span 5 to 25 (FLFI…EFVP), 47 to 67 (GFPE…VVVL), 72 to 92 (ISSS…LKTS), 111 to 131 (FGIN…LFHD), 137 to 157 (LFST…LIVI), 209 to 231 (ISGL…AMVG), 248 to 268 (TNWI…LVVI), and 283 to 303 (FAIY…TKVI).

It belongs to the UppP family.

The protein resides in the cell membrane. It catalyses the reaction di-trans,octa-cis-undecaprenyl diphosphate + H2O = di-trans,octa-cis-undecaprenyl phosphate + phosphate + H(+). Functionally, catalyzes the dephosphorylation of undecaprenyl diphosphate (UPP). Confers resistance to bacitracin. The chain is Undecaprenyl-diphosphatase from Clostridium perfringens (strain ATCC 13124 / DSM 756 / JCM 1290 / NCIMB 6125 / NCTC 8237 / Type A).